Reading from the N-terminus, the 601-residue chain is Elongation factor 4 (601 aa).

Residues 7 to 189 (RNIRNFSIIA…AIVHRIPPPA (183 aa)) form the tr-type G domain. Residues 19-24 (DHGKST) and 136-139 (NKID) each bind GTP.

This sequence belongs to the TRAFAC class translation factor GTPase superfamily. Classic translation factor GTPase family. LepA subfamily.

The protein resides in the cell inner membrane. The enzyme catalyses GTP + H2O = GDP + phosphate + H(+). Required for accurate and efficient protein synthesis under certain stress conditions. May act as a fidelity factor of the translation reaction, by catalyzing a one-codon backward translocation of tRNAs on improperly translocated ribosomes. Back-translocation proceeds from a post-translocation (POST) complex to a pre-translocation (PRE) complex, thus giving elongation factor G a second chance to translocate the tRNAs correctly. Binds to ribosomes in a GTP-dependent manner. In Xanthomonas oryzae pv. oryzae (strain MAFF 311018), this protein is Elongation factor 4.